The sequence spans 88 residues: Small ribosomal subunit protein uS17 (88 aa).

It belongs to the universal ribosomal protein uS17 family. Part of the 30S ribosomal subunit.

In terms of biological role, one of the primary rRNA binding proteins, it binds specifically to the 5'-end of 16S ribosomal RNA. The sequence is that of Small ribosomal subunit protein uS17 from Prochlorococcus marinus subsp. pastoris (strain CCMP1986 / NIES-2087 / MED4).